Consider the following 253-residue polypeptide: Bacitracin export ATP-binding protein BceA (253 aa).

The region spanning 4–243 (LEATNIHKSY…TFFKDIMKTQ (240 aa)) is the ABC transporter domain. 40–47 (GASGSGKT) serves as a coordination point for ATP.

This sequence belongs to the ABC transporter superfamily. In terms of assembly, the complex is composed of two ATP-binding proteins (BceA) and two transmembrane proteins (BceB).

Functionally, part of the ABC transporter complex BceAB (TC 3.A.1.123.5) involved in bacitracin export. Responsible for energy coupling to the transport system. The chain is Bacitracin export ATP-binding protein BceA (bceA) from Halalkalibacterium halodurans (strain ATCC BAA-125 / DSM 18197 / FERM 7344 / JCM 9153 / C-125) (Bacillus halodurans).